Consider the following 477-residue polypeptide: Glycogen synthase 1 (477 aa).

An ADP-alpha-D-glucose-binding site is contributed by Lys15.

This sequence belongs to the glycosyltransferase 1 family. Bacterial/plant glycogen synthase subfamily.

It catalyses the reaction [(1-&gt;4)-alpha-D-glucosyl](n) + ADP-alpha-D-glucose = [(1-&gt;4)-alpha-D-glucosyl](n+1) + ADP + H(+). It participates in glycan biosynthesis; glycogen biosynthesis. Functionally, synthesizes alpha-1,4-glucan chains using ADP-glucose. The polypeptide is Glycogen synthase 1 (glgA1) (Synechocystis sp. (strain ATCC 27184 / PCC 6803 / Kazusa)).